We begin with the raw amino-acid sequence, 540 residues long: Protein GDAP2 homolog (540 aa).

The region spanning 56 to 235 (RSPFPLCKDV…TYEVLAPLYF (180 aa)) is the Macro domain. In terms of domain architecture, CRAL-TRIO spans 371–528 (QVEDLTEVSG…YITEYDMATN (158 aa)).

This sequence belongs to the GDAP2 family.

The polypeptide is Protein GDAP2 homolog (Drosophila melanogaster (Fruit fly)).